The chain runs to 418 residues: Histidinol dehydrogenase (418 aa).

The NAD(+) site is built by Tyr119, Gln180, and Asn203. The substrate site is built by Thr226, Gln248, and His251. Zn(2+)-binding residues include Gln248 and His251. Active-site proton acceptor residues include Glu316 and His317. 4 residues coordinate substrate: His317, Asp350, Glu404, and His409. Residue Asp350 coordinates Zn(2+). His409 is a binding site for Zn(2+).

The protein belongs to the histidinol dehydrogenase family. The cofactor is Zn(2+).

The catalysed reaction is L-histidinol + 2 NAD(+) + H2O = L-histidine + 2 NADH + 3 H(+). It participates in amino-acid biosynthesis; L-histidine biosynthesis; L-histidine from 5-phospho-alpha-D-ribose 1-diphosphate: step 9/9. Its function is as follows. Catalyzes the sequential NAD-dependent oxidations of L-histidinol to L-histidinaldehyde and then to L-histidine. In Staphylococcus aureus (strain MRSA252), this protein is Histidinol dehydrogenase.